A 207-amino-acid chain; its full sequence is Ribosomal RNA small subunit methyltransferase G (207 aa).

S-adenosyl-L-methionine contacts are provided by residues G74, L79, 125 to 126 (VE), and R140.

The protein belongs to the methyltransferase superfamily. RNA methyltransferase RsmG family.

Its subcellular location is the cytoplasm. It catalyses the reaction guanosine(527) in 16S rRNA + S-adenosyl-L-methionine = N(7)-methylguanosine(527) in 16S rRNA + S-adenosyl-L-homocysteine. In terms of biological role, specifically methylates the N7 position of guanine in position 527 of 16S rRNA. This Shewanella pealeana (strain ATCC 700345 / ANG-SQ1) protein is Ribosomal RNA small subunit methyltransferase G.